The sequence spans 302 residues: Lactoylglutathione lyase (302 aa).

VOC domains follow at residues 11–153 (KLNH…LVSQ) and 166–301 (RFNH…VIEQ). Residue H14 coordinates Zn(2+). R18 serves as a coordination point for substrate. Residue E75 participates in Zn(2+) binding. The substrate site is built by N79, R99, and H103. Zn(2+)-binding residues include H103 and E149. E149 acts as the Proton donor/acceptor in catalysis.

The protein belongs to the glyoxalase I family. In terms of assembly, monomer. The cofactor is Zn(2+). Cu(2+) is required as a cofactor. Ni(2+) serves as cofactor. It depends on Mn(2+) as a cofactor.

The catalysed reaction is (R)-S-lactoylglutathione = methylglyoxal + glutathione. It participates in secondary metabolite metabolism; methylglyoxal degradation; (R)-lactate from methylglyoxal: step 1/2. Its function is as follows. Catalyzes the conversion of hemimercaptal, formed from methylglyoxal and glutathione, to S-lactoylglutathione. This is Lactoylglutathione lyase (glo1) from Schizosaccharomyces pombe (strain 972 / ATCC 24843) (Fission yeast).